Here is an 89-residue protein sequence, read N- to C-terminus: UPF0367 protein PCC8801_1959 (89 aa).

The protein belongs to the UPF0367 family.

The polypeptide is UPF0367 protein PCC8801_1959 (Rippkaea orientalis (strain PCC 8801 / RF-1) (Cyanothece sp. (strain PCC 8801))).